Here is a 173-residue protein sequence, read N- to C-terminus: Photosystem I assembly protein Ycf3 (173 aa).

TPR repeat units lie at residues A35–P68, S72–M105, and G120–N153.

It belongs to the Ycf3 family.

The protein localises to the cellular thylakoid membrane. Functionally, essential for the assembly of the photosystem I (PSI) complex. May act as a chaperone-like factor to guide the assembly of the PSI subunits. This Trichodesmium erythraeum (strain IMS101) protein is Photosystem I assembly protein Ycf3.